Consider the following 292-residue polypeptide: Phosphatidylglycerol--prolipoprotein diacylglyceryl transferase (292 aa).

The next 4 helical transmembrane spans lie at 18 to 38 (LFGA…GLLI), 67 to 87 (LLTW…VLFY), 105 to 125 (GGMS…AFCL), and 129 to 149 (ISIL…LFLG). R150 contacts a 1,2-diacyl-sn-glycero-3-phospho-(1'-sn-glycerol). Transmembrane regions (helical) follow at residues 193–213 (QLYE…ILIW), 222–242 (GAVT…VEFV), and 266–286 (GLTM…YFML).

The protein belongs to the Lgt family.

The protein localises to the cell inner membrane. It catalyses the reaction L-cysteinyl-[prolipoprotein] + a 1,2-diacyl-sn-glycero-3-phospho-(1'-sn-glycerol) = an S-1,2-diacyl-sn-glyceryl-L-cysteinyl-[prolipoprotein] + sn-glycerol 1-phosphate + H(+). It participates in protein modification; lipoprotein biosynthesis (diacylglyceryl transfer). Catalyzes the transfer of the diacylglyceryl group from phosphatidylglycerol to the sulfhydryl group of the N-terminal cysteine of a prolipoprotein, the first step in the formation of mature lipoproteins. This is Phosphatidylglycerol--prolipoprotein diacylglyceryl transferase from Cereibacter sphaeroides (strain ATCC 17025 / ATH 2.4.3) (Rhodobacter sphaeroides).